The chain runs to 869 residues: Rho GTPase-activating protein 27 (869 aa).

The SH3 domain maps to 6–69 (EGDVYVLVEH…PAQYVRELPA (64 aa)). Alanine 28 carries the post-translational modification Phosphotyrosine. The tract at residues 104–134 (GADGSSAEPRGRASSLCGPARQRTGGQRNSL) is disordered. 3 positions are modified to phosphoserine: serine 155, serine 215, and serine 249. 2 disordered regions span residues 208–300 (RCPP…SGES) and 331–401 (ETEE…GWSC). Residues 209 to 220 (CPPRAESPKQVD) show a composition bias toward basic and acidic residues. A compositionally biased stretch (low complexity) spans 235–250 (RATSPRSAAAPPRLSP). The WW 1 domain maps to 246–280 (PRLSPVWETHTDTGTGRPYYYNPDTGVTTWESPFE). Polar residues predominate over residues 283–294 (EGTTSPATSRAS). A WW 2 domain is found at 299–333 (ESLETEWGQYWDEESRRVFFYNPLTGETAWEDETE). Over residues 345 to 356 (MQPSLSPRSPGQ) the composition is skewed to polar residues. Serine 350 is subject to Phosphoserine. In terms of domain architecture, WW 3 spans 414–447 (QFTQEQWVRLEDQHGKPYFYNPEDSSVQWELPQV). Disordered stretches follow at residues 449–477 (IPAP…KIKT) and 623–642 (EEDV…GLES). 2 positions are modified to phosphoserine: serine 459 and serine 462. Phosphothreonine is present on threonine 464. Serine 469 carries the phosphoserine modification. In terms of domain architecture, PH spans 477–593 (TLDKAGVLHR…WHKAIAEGIS (117 aa)). A phosphoserine mark is found at serine 632 and serine 636. The 190-residue stretch at 677 to 866 (CALAQLCERE…LILHQCADIF (190 aa)) folds into the Rho-GAP domain.

As to quaternary structure, interacts with SH3KBP1/CIN85. In terms of tissue distribution, widely expressed. Highly expressed in kidney, lung, small intestine and thymus.

The protein localises to the cytoplasm. The protein resides in the membrane. Rho GTPase-activating protein which may be involved in clathrin-mediated endocytosis. GTPase activators for the Rho-type GTPases act by converting them to an inactive GDP-bound state. Has activity toward CDC42 and RAC1. The sequence is that of Rho GTPase-activating protein 27 (Arhgap27) from Mus musculus (Mouse).